Reading from the N-terminus, the 246-residue chain is 3-deoxy-manno-octulosonate cytidylyltransferase (246 aa).

This sequence belongs to the KdsB family.

It is found in the cytoplasm. It catalyses the reaction 3-deoxy-alpha-D-manno-oct-2-ulosonate + CTP = CMP-3-deoxy-beta-D-manno-octulosonate + diphosphate. Its pathway is nucleotide-sugar biosynthesis; CMP-3-deoxy-D-manno-octulosonate biosynthesis; CMP-3-deoxy-D-manno-octulosonate from 3-deoxy-D-manno-octulosonate and CTP: step 1/1. It functions in the pathway bacterial outer membrane biogenesis; lipopolysaccharide biosynthesis. In terms of biological role, activates KDO (a required 8-carbon sugar) for incorporation into bacterial lipopolysaccharide in Gram-negative bacteria. The polypeptide is 3-deoxy-manno-octulosonate cytidylyltransferase (Rickettsia felis (strain ATCC VR-1525 / URRWXCal2) (Rickettsia azadi)).